Consider the following 267-residue polypeptide: Probable membrane transporter protein MJ0441 (267 aa).

7 helical membrane-spanning segments follow: residues 10–30 (LLLL…GSLF), 31–51 (GIGG…YFGI), 55–75 (VKFA…ISIF), 87–107 (ASIT…FLVV), 158–178 (FLSG…LAMA), 185–205 (AVAI…ISYL), and 213–233 (IYNI…PIIY).

The protein belongs to the 4-toluene sulfonate uptake permease (TSUP) (TC 2.A.102) family.

Its subcellular location is the cell membrane. The polypeptide is Probable membrane transporter protein MJ0441 (Methanocaldococcus jannaschii (strain ATCC 43067 / DSM 2661 / JAL-1 / JCM 10045 / NBRC 100440) (Methanococcus jannaschii)).